The following is a 90-amino-acid chain: DNA-binding protein HU-beta (90 aa).

This sequence belongs to the bacterial histone-like protein family. In terms of assembly, heterodimer of an alpha and a beta chain.

Histone-like DNA-binding protein which is capable of wrapping DNA to stabilize it, and thus to prevent its denaturation under extreme environmental conditions. The polypeptide is DNA-binding protein HU-beta (hupB) (Salmonella typhi).